The sequence spans 635 residues: 1-deoxy-D-xylulose-5-phosphate synthase (635 aa).

Residues His-79 and Gly-120–Ser-122 contribute to the thiamine diphosphate site. Asp-151 is a Mg(2+) binding site. Thiamine diphosphate-binding positions include Gly-152–Ala-153, Asn-182, Tyr-290, and Glu-372. Residue Asn-182 coordinates Mg(2+).

The protein belongs to the transketolase family. DXPS subfamily. Homodimer. Mg(2+) is required as a cofactor. Thiamine diphosphate serves as cofactor.

The catalysed reaction is D-glyceraldehyde 3-phosphate + pyruvate + H(+) = 1-deoxy-D-xylulose 5-phosphate + CO2. The protein operates within metabolic intermediate biosynthesis; 1-deoxy-D-xylulose 5-phosphate biosynthesis; 1-deoxy-D-xylulose 5-phosphate from D-glyceraldehyde 3-phosphate and pyruvate: step 1/1. Functionally, catalyzes the acyloin condensation reaction between C atoms 2 and 3 of pyruvate and glyceraldehyde 3-phosphate to yield 1-deoxy-D-xylulose-5-phosphate (DXP). The polypeptide is 1-deoxy-D-xylulose-5-phosphate synthase (Stenotrophomonas maltophilia (strain K279a)).